The following is a 329-amino-acid chain: BRISC and BRCA1-A complex member 1 (329 aa).

The residue at position 1 (M1) is an N-acetylmethionine. Positions 1 to 86 (MEVAEPSSPT…PPAPEVQIRT (86 aa)) are disordered. S8 is modified (phosphoserine). Residues 10–19 (TEEEEEEEEH) show a composition bias toward acidic residues. S29, S49, S57, and S62 each carry phosphoserine. T65 is subject to Phosphothreonine. S66 is modified (phosphoserine). A VWFA-like region spans residues 95–298 (VIICLDLSEE…LELHNCMVKL (204 aa)).

It belongs to the BABAM1 family. Component of the ARISC complex, at least composed of UIMC1/RAP80, ABRAXAS1, BRCC3/BRCC36, BABAM2 and BABAM1/NBA1. Component of the BRCA1-A complex, at least composed of BRCA1, BARD1, UIMC1/RAP80, ABRAXAS1, BRCC3/BRCC36, BABAM2 and BABAM1/NBA1. In the BRCA1-A complex, interacts directly with ABRAXAS1 and BABAM2. Component of the BRISC complex, at least composed of ABRAXAS2, BRCC3/BRCC36, BABAM2 and BABAM1/NBA1. Identified in a complex with SHMT2 and the other subunits of the BRISC complex.

It is found in the cytoplasm. It localises to the nucleus. Its function is as follows. Component of the BRCA1-A complex, a complex that specifically recognizes 'Lys-63'-linked ubiquitinated histones H2A and H2AX at DNA lesions sites, leading to target the BRCA1-BARD1 heterodimer to sites of DNA damage at double-strand breaks (DSBs). The BRCA1-A complex also possesses deubiquitinase activity that specifically removes 'Lys-63'-linked ubiquitin on histones H2A and H2AX. In the BRCA1-A complex, it is required for the complex integrity and its localization at DSBs. Component of the BRISC complex, a multiprotein complex that specifically cleaves 'Lys-63'-linked ubiquitin in various substrates. In these 2 complexes, it is probably required to maintain the stability of BABAM2 and help the 'Lys-63'-linked deubiquitinase activity mediated by BRCC3/BRCC36 component. The BRISC complex is required for normal mitotic spindle assembly and microtubule attachment to kinetochores via its role in deubiquitinating NUMA1. Plays a role in interferon signaling via its role in the deubiquitination of the interferon receptor IFNAR1; deubiquitination increases IFNAR1 activity by enhancing its stability and cell surface expression. Down-regulates the response to bacterial lipopolysaccharide (LPS) via its role in IFNAR1 deubiquitination. This is BRISC and BRCA1-A complex member 1 (BABAM1) from Callithrix jacchus (White-tufted-ear marmoset).